Here is a 151-residue protein sequence, read N- to C-terminus: SsrA-binding protein (151 aa).

This sequence belongs to the SmpB family.

It is found in the cytoplasm. Required for rescue of stalled ribosomes mediated by trans-translation. Binds to transfer-messenger RNA (tmRNA), required for stable association of tmRNA with ribosomes. tmRNA and SmpB together mimic tRNA shape, replacing the anticodon stem-loop with SmpB. tmRNA is encoded by the ssrA gene; the 2 termini fold to resemble tRNA(Ala) and it encodes a 'tag peptide', a short internal open reading frame. During trans-translation Ala-aminoacylated tmRNA acts like a tRNA, entering the A-site of stalled ribosomes, displacing the stalled mRNA. The ribosome then switches to translate the ORF on the tmRNA; the nascent peptide is terminated with the 'tag peptide' encoded by the tmRNA and targeted for degradation. The ribosome is freed to recommence translation, which seems to be the essential function of trans-translation. The sequence is that of SsrA-binding protein from Chlamydia pneumoniae (Chlamydophila pneumoniae).